The primary structure comprises 887 residues: Cadherin-1 (887 aa).

The N-terminal stretch at methionine 1–glycine 26 is a signal peptide. The propeptide occupies arginine 27–arginine 160. 5 consecutive Cadherin domains span residues aspartate 161–phenylalanine 268, isoleucine 269–phenylalanine 381, asparagine 382–phenylalanine 493, valine 494–proline 599, and threonine 600–tyrosine 704. Topologically, residues aspartate 161 to isoleucine 714 are extracellular. Ca(2+) is bound at residue aspartate 263. The N-linked (GlcNAc...) asparagine glycan is linked to asparagine 291. Residue aspartate 294 coordinates Ca(2+). An N-linked (GlcNAc...) asparagine glycan is attached at asparagine 346. 2 N-linked (GlcNAc...) asparagine glycosylation sites follow: asparagine 564 and asparagine 643. The chain crosses the membrane as a helical span at residues leucine 715 to alanine 735. The Cytoplasmic segment spans residues arginine 736–glutamate 887. Positions leucine 745–aspartate 770 are disordered. Over residues tyrosine 759–aspartate 770 the composition is skewed to acidic residues.

As to quaternary structure, homodimer. Interacts with CTNNA2. As to expression, expressed in the liver.

The protein resides in the cell junction. It is found in the adherens junction. Its subcellular location is the cell membrane. The protein localises to the endosome. It localises to the golgi apparatus. The protein resides in the trans-Golgi network. It is found in the cytoplasm. Its subcellular location is the desmosome. Functionally, cadherins are calcium-dependent cell adhesion proteins. They preferentially interact with themselves in a homophilic manner in connecting cells; cadherins may thus contribute to the sorting of heterogeneous cell types. Promotes organization of radial actin fiber structure and cellular response to contractile forces, via anchoring of radial actin fibers to CDH1 junction complexes at the cell membrane. E-cadherin is a ligand for integrin alpha-E/beta-7. The chain is Cadherin-1 (CDH1) from Gallus gallus (Chicken).